A 115-amino-acid chain; its full sequence is Large ribosomal subunit protein bL19 (115 aa).

It belongs to the bacterial ribosomal protein bL19 family.

In terms of biological role, this protein is located at the 30S-50S ribosomal subunit interface and may play a role in the structure and function of the aminoacyl-tRNA binding site. In Enterobacter sp. (strain 638), this protein is Large ribosomal subunit protein bL19.